The following is a 623-amino-acid chain: Heterogeneous nuclear ribonucleoprotein Q (623 aa).

A2 carries the N-acetylalanine modification. Residue S159 is modified to Phosphoserine. RRM domains lie at 162 to 241, 243 to 325, and 338 to 408; these read TEIF…ISVA, NRLF…WADP, and KVLF…FAKP. A Glycyl lysine isopeptide (Lys-Gly) (interchain with G-Cter in SUMO2) cross-link involves residue K168. Residue K221 is modified to N6-acetyllysine. Position 363 is an N6-acetyllysine (K363). Y373 bears the Phosphotyrosine mark. The interval 400-561 is interaction with APOBEC1; it reads NIEIVFAKPP…GARGGRGGNV (162 aa). R444 bears the Asymmetric dimethylarginine; by PRMT1; alternate mark. An Omega-N-methylarginine; by PRMT1; alternate modification is found at R444. 6 repeat units span residues 448 to 450, 451 to 453, 460 to 464, 469 to 472, 478 to 480, and 485 to 488. The 8 X 3 AA repeats of R-G-G stretch occupies residues 448–559; it reads RGGRGGYGYP…VRGARGGRGG (112 aa). The interval 460–488 is 3 X 4 AA repeats of Y-Y-G-Y; the sequence is YYGYEDYYDYYGYDYHNYRGGYEDPYYGY. Position 496 is an omega-N-methylarginine; by PRMT1 (R496). Residues 497-623 are disordered; the sequence is GRGGRGARGA…YQDTFGQQWK (127 aa). A 1-4 repeat occupies 498–500; that stretch reads RGG. The segment covering 504–522 has biased composition (low complexity); sequence RGAAPSRGRGAAPPRGRAG. R510 is subject to Asymmetric dimethylarginine; by PRMT1. R518 is modified (asymmetric dimethylarginine; by PRMT1; alternate). R518 carries the post-translational modification Omega-N-methylarginine; by PRMT1; alternate. The interaction with SMN stretch occupies residues 518-549; it reads RGRAGYSQRGGPGSARGVRGARGGAQQQRGRG. R526 is modified (asymmetric dimethylarginine; alternate). R526 carries the omega-N-methylarginine; alternate modification. The stretch at 526–528 is one 1-5 repeat; it reads RGG. R536 and R539 each carry asymmetric dimethylarginine; by PRMT1; alternate. Omega-N-methylarginine; by PRMT1; alternate is present on residues R536 and R539. 3 repeat units span residues 539-541, 554-556, and 557-559. Residues 550–562 show a composition bias toward gly residues; it reads VRGARGGRGGNVG. A Bipartite nuclear localization signal motif is present at residues 564-578; the sequence is KRKADGYNQPDTKRR. The span at 580-595 shows a compositional bias: polar residues; that stretch reads TNNQNWGSQPIAQQPL. S587 is subject to Phosphoserine. K607 participates in a covalent cross-link: Glycyl lysine isopeptide (Lys-Gly) (interchain with G-Cter in SUMO2). Over residues 611–623 the composition is skewed to polar residues; the sequence is QEFYQDTFGQQWK.

Identified in the spliceosome C complex. Component of the coding region determinant (CRD)-mediated complex, composed of DHX9, HNRNPU, IGF2BP1, SYNCRIP and YBX1. Identified in a mRNP complex, at least composed of DHX9, DDX3X, ELAVL1, HNRNPU, IGF2BP1, ILF3, PABPC1, PCBP2, PTBP2, STAU1, STAU2, SYNCRIP and YBX1. Identified in a mRNP granule complex, at least composed of ACTB, ACTN4, DHX9, ERG, HNRNPA1, HNRNPA2B1, HNRNPAB, HNRNPD, HNRNPL, HNRNPR, HNRNPU, HSPA1, HSPA8, IGF2BP1, ILF2, ILF3, NCBP1, NCL, PABPC1, PABPC4, PABPN1, RPLP0, RPS3, RPS3A, RPS4X, RPS8, RPS9, SYNCRIP, YBX1 and untranslated mRNAs. Interacts with GTPBP1. Isoform 1 is a component of the APOB mRNA editosome complex. Isoform 1 interacts with APOBEC1 and A1CF. Part of a complex associated with the FOS mCRD domain and consisting of PABPC1, PAIP1, CSDE1/UNR, HNRPD and SYNCRIP. Isoform 2 interacts with HNRPR. Interacts with POLR2A hyperphosphorylated C-terminal domain. Interacts with HABP4. Identified in a histone pre-mRNA complex, at least composed of ERI1, LSM11, SLBP, SNRPB, SYNCRIP and YBX1. Isoform 1 and isoform 2 interact with SMN. Isoform 2 interacts through its C-terminal domain with SYT7, SYT8 and SYT9. The non-phosphorylated and phosphorylated forms are colocalized with PAIP1 in polysomes. Phosphorylated on tyrosine. The membrane-bound form found in microsomes is phosphorylated in vitro by insulin receptor tyrosine kinase (INSR). Phosphorylation is inhibited upon binding to RNA, whereas the cytoplasmic form is poorly phosphorylated. As to expression, ubiquitous. Detected in heart, brain, spleen, lung, liver, skeletal muscle, adipocytes, kidney and testis.

The protein localises to the nucleus. It localises to the nucleoplasm. The protein resides in the microsome. It is found in the cytoplasm. Its function is as follows. Heterogeneous nuclear ribonucleoprotein (hnRNP) implicated in mRNA processing mechanisms. Component of the CRD-mediated complex that promotes MYC mRNA stability. Isoform 1 and isoform 2 are associated in vitro with pre-mRNA, splicing intermediates and mature mRNA protein complexes. Isoform 1 binds to apoB mRNA AU-rich sequences. Isoform 1 is part of the APOB mRNA editosome complex and may modulate the postranscriptional C to U RNA-editing of the APOB mRNA through either by binding to A1CF (APOBEC1 complementation factor), to APOBEC1 or to RNA itself. May be involved in translationally coupled mRNA turnover. Implicated with other RNA-binding proteins in the cytoplasmic deadenylation/translational and decay interplay of the FOS mRNA mediated by the major coding-region determinant of instability (mCRD) domain. Interacts in vitro preferentially with poly(A) and poly(U) RNA sequences. Isoform 2 may be involved in cytoplasmic vesicle-based mRNA transport through interaction with synaptotagmins. This Mus musculus (Mouse) protein is Heterogeneous nuclear ribonucleoprotein Q (Syncrip).